A 513-amino-acid polypeptide reads, in one-letter code: ATP synthase subunit alpha (513 aa).

ATP is bound at residue G169–T176.

The protein belongs to the ATPase alpha/beta chains family. In terms of assembly, F-type ATPases have 2 components, CF(1) - the catalytic core - and CF(0) - the membrane proton channel. CF(1) has five subunits: alpha(3), beta(3), gamma(1), delta(1), epsilon(1). CF(0) has three main subunits: a(1), b(2) and c(9-12). The alpha and beta chains form an alternating ring which encloses part of the gamma chain. CF(1) is attached to CF(0) by a central stalk formed by the gamma and epsilon chains, while a peripheral stalk is formed by the delta and b chains.

It localises to the cell inner membrane. It catalyses the reaction ATP + H2O + 4 H(+)(in) = ADP + phosphate + 5 H(+)(out). Produces ATP from ADP in the presence of a proton gradient across the membrane. The alpha chain is a regulatory subunit. The polypeptide is ATP synthase subunit alpha (Shewanella loihica (strain ATCC BAA-1088 / PV-4)).